The primary structure comprises 353 residues: Ion-translocating oxidoreductase complex subunit D (353 aa).

Helical transmembrane passes span 20–39 (LMRLVIYATLPGVLAQWYFF), 68–88 (PISHELFDGSALLTALLLGIC), and 129–149 (VMLLVSFPLQMTLWQPPLTLV). Threonine 187 carries the post-translational modification FMN phosphoryl threonine. Transmembrane regions (helical) follow at residues 215–235 (LALGWEWVNAGFLLGGLFLIS), 238–258 (AIAWQTPISFLLSLFICSFIG), 267–287 (ASTMFHWFSGATMLGAFFILT), and 300–320 (IIVGLLAGLLVYLIRTSGGYP).

It belongs to the NqrB/RnfD family. As to quaternary structure, the complex is composed of six subunits: RnfA, RnfB, RnfC, RnfD, RnfE and RnfG. FMN is required as a cofactor.

Its subcellular location is the cell inner membrane. In terms of biological role, part of a membrane-bound complex that couples electron transfer with translocation of ions across the membrane. This Colwellia psychrerythraea (strain 34H / ATCC BAA-681) (Vibrio psychroerythus) protein is Ion-translocating oxidoreductase complex subunit D.